Reading from the N-terminus, the 93-residue chain is Protein NONRESPONDING TO OXYLIPINS 2, mitochondrial (93 aa).

The N-terminal 27 residues, 1–27 (MASRCRSLSKPAFSAFRSAMNKPSIRP), are a transit peptide targeting the mitochondrion.

In terms of tissue distribution, expressed in cotyledons, roots and flowers.

It localises to the mitochondrion. Essential for mitochondrial morphology, functionality and distribution. Contributes to 9-lipoxygenase (9-LOX)-derived oxylipin synthesis, but not to brassinosteroids (BRs) signaling. Required for waving-inducing oxylipin 9-hydroxyoctadecatrienoic acid and derivatives (e.g. 9-HOT, 2-HOE, 13-HOT, 13-HOD, 13-KOD, 12,13-KHOD, 9-HOT, 9-HOD, 9-KOT, 9-KOD and 9,10-KHOE)-mediated root development regulation, including callose deposition, root waving and lateral roots formation. Involved in basal plant defense toward pathogenic bacteria (e.g. Pseudomonas syringae pv tomato), both in compatible (e.g. Pst DC3000) and incompatible (e.g. Pst DC3000 avrRPM1) interactions, as well as against obligate biotrophic pathogenic fungi (e.g. Golovinomyces cichoracearum), probably via the promotion of callose deposition in the cell wall. Confers sensitivity to the herbicide isoxaben, a herbicide inhibiting cellulose synthesis and altering the cell wall. The sequence is that of Protein NONRESPONDING TO OXYLIPINS 2, mitochondrial from Arabidopsis thaliana (Mouse-ear cress).